Consider the following 467-residue polypeptide: A-type ATP synthase subunit B (467 aa).

This sequence belongs to the ATPase alpha/beta chains family. Has multiple subunits with at least A(3), B(3), C, D, E, F, H, I and proteolipid K(x).

It is found in the cell membrane. Functionally, component of the A-type ATP synthase that produces ATP from ADP in the presence of a proton gradient across the membrane. The B chain is a regulatory subunit. The sequence is that of A-type ATP synthase subunit B from Methanosphaera stadtmanae (strain ATCC 43021 / DSM 3091 / JCM 11832 / MCB-3).